A 396-amino-acid chain; its full sequence is NADH-quinone oxidoreductase subunit D 1 (396 aa).

This sequence belongs to the complex I 49 kDa subunit family. NDH-1 is composed of 14 different subunits. Subunits NuoB, C, D, E, F, and G constitute the peripheral sector of the complex.

The protein localises to the cell inner membrane. It carries out the reaction a quinone + NADH + 5 H(+)(in) = a quinol + NAD(+) + 4 H(+)(out). Its function is as follows. NDH-1 shuttles electrons from NADH, via FMN and iron-sulfur (Fe-S) centers, to quinones in the respiratory chain. The immediate electron acceptor for the enzyme in this species is believed to be ubiquinone. Couples the redox reaction to proton translocation (for every two electrons transferred, four hydrogen ions are translocated across the cytoplasmic membrane), and thus conserves the redox energy in a proton gradient. This Beijerinckia indica subsp. indica (strain ATCC 9039 / DSM 1715 / NCIMB 8712) protein is NADH-quinone oxidoreductase subunit D 1.